The sequence spans 404 residues: Spore germination protein YndF (404 aa).

The N-terminal stretch at Met-1–Gly-24 is a signal peptide. Cys-25 carries the N-palmitoyl cysteine lipid modification. Residue Cys-25 is the site of S-diacylglycerol cysteine attachment.

Belongs to the GerABKC lipoprotein family.

It localises to the cell membrane. Functionally, may be involved in spore germination. The chain is Spore germination protein YndF (yndF) from Bacillus subtilis (strain 168).